Reading from the N-terminus, the 207-residue chain is MPKVALYNQNGQTIGEIELNDAVFGIEPNKHVLFEAVIMQRASMRQGTHKTKNRAEVSGGGRKPWRQKGTGRARQGSIRSPQWRGGGTVFGPVPRSYSYKLPKKVRRLAIKSALSSKVLENDIVVLDQLSLEAPKTKEMVKILNNLAVDRKALIVTDELNENVYLSARNIPGVKVVAANGINVLDVLSHDKLVITKAAVEKVEEVLA.

The interval 44–85 (MRQGTHKTKNRAEVSGGGRKPWRQKGTGRARQGSIRSPQWRG) is disordered.

The protein belongs to the universal ribosomal protein uL4 family. Part of the 50S ribosomal subunit.

In terms of biological role, one of the primary rRNA binding proteins, this protein initially binds near the 5'-end of the 23S rRNA. It is important during the early stages of 50S assembly. It makes multiple contacts with different domains of the 23S rRNA in the assembled 50S subunit and ribosome. Functionally, forms part of the polypeptide exit tunnel. The sequence is that of Large ribosomal subunit protein uL4 from Geobacillus thermodenitrificans (strain NG80-2).